Here is a 950-residue protein sequence, read N- to C-terminus: Inactive atromentin synthetase invA4 (950 aa).

Positions 37–460 (SRAVSQYPNH…SGRIKDTVVV (424 aa)) are adenylation (A) domain. Positions 592-670 (APSTETEKTL…TLAKYVDSLV (79 aa)) constitute a Carrier domain. The thiolation and peptide carrier (T) domain stretch occupies residues 597-667 (TEKTLAGIYA…EIITLAKYVD (71 aa)). Residue S629 is modified to O-(pantetheine 4'-phosphoryl)serine. The segment at 693 to 797 (PIFMVHPGIG…GIIDMIPHHM (105 aa)) is thioesterase (TE) domain.

The protein belongs to the ATP-dependent AMP-binding enzyme family.

Its function is as follows. Inactive atromentin synthetase homolog. Does not accept 4-hydroxyphenylpyruvate (4-HPP) as substrate. The protein is Inactive atromentin synthetase invA4 (invA4) of Paxillus involutus (Naked brimcap).